The chain runs to 129 residues: MSYKFPNNLKYADTHEYVKEENGLLKIGVSEFAIDQLGDIVFVELVEKGTNLQKGETFGTIESVKAVEEVYLPFAGEVLSVNESVIDNPEILQNDPIGNGWLLIIKPESNVLLDELMNSDEYKSKVSPN.

In terms of domain architecture, Lipoyl-binding spans 24–106; the sequence is LLKIGVSEFA…IGNGWLLIIK (83 aa). An N6-lipoyllysine modification is found at lysine 65.

Belongs to the GcvH family. In terms of assembly, the glycine cleavage system is composed of four proteins: P, T, L and H. (R)-lipoate serves as cofactor.

The glycine cleavage system catalyzes the degradation of glycine. The H protein shuttles the methylamine group of glycine from the P protein to the T protein. In Prochlorococcus marinus (strain MIT 9515), this protein is Glycine cleavage system H protein.